We begin with the raw amino-acid sequence, 574 residues long: Isocitrate dehydrogenase kinase/phosphatase (574 aa).

ATP is bound by residues 311-317 (APGIRGM) and K332. Residue D367 is part of the active site.

Belongs to the AceK family.

It is found in the cytoplasm. The enzyme catalyses L-seryl-[isocitrate dehydrogenase] + ATP = O-phospho-L-seryl-[isocitrate dehydrogenase] + ADP + H(+). Bifunctional enzyme which can phosphorylate or dephosphorylate isocitrate dehydrogenase (IDH) on a specific serine residue. This is a regulatory mechanism which enables bacteria to bypass the Krebs cycle via the glyoxylate shunt in response to the source of carbon. When bacteria are grown on glucose, IDH is fully active and unphosphorylated, but when grown on acetate or ethanol, the activity of IDH declines drastically concomitant with its phosphorylation. The protein is Isocitrate dehydrogenase kinase/phosphatase of Shigella boydii serotype 4 (strain Sb227).